Reading from the N-terminus, the 436-residue chain is Testican-3 (436 aa).

An N-terminal signal peptide occupies residues 1–22; sequence MLKVSALLCVCAAAWCSQTLAA. Disulfide bonds link cysteine 90–cysteine 101, cysteine 95–cysteine 111, cysteine 139–cysteine 169, cysteine 142–cysteine 162, cysteine 151–cysteine 183, cysteine 317–cysteine 341, cysteine 352–cysteine 359, and cysteine 361–cysteine 380. The Kazal-like domain occupies 133-185; it reads GLPSSTCKPCPIAYASPVCGSDGHSYSSQCKLEYQACVLGKQISIKCEGRCPC. The region spanning 314-380 is the Thyroglobulin type-1 domain; the sequence is DPPCHTELSN…GSRINGVADC (67 aa). Residues serine 387 and serine 392 are each glycosylated (O-linked (Xyl...) (glycosaminoglycan) serine). Positions 393–436 are disordered; it reads GDFREWTDDEGEEDDIMNDKDDIEDDDEDEGDDDDDGDVHDGYI. The segment covering 399-430 has biased composition (acidic residues); the sequence is TDDEGEEDDIMNDKDDIEDDDEDEGDDDDDGD.

In terms of processing, contains chondroitin sulfate and heparan sulfate O-linked oligosaccharides. As to expression, expressed in brain.

The protein localises to the secreted. The protein resides in the extracellular space. It is found in the extracellular matrix. In terms of biological role, may participate in diverse steps of neurogenesis. Inhibits the processing of pro-matrix metalloproteinase 2 (MMP-2) by MT1-MMP and MT3-MMP. May interfere with tumor invasion. This is Testican-3 (Spock3) from Mus musculus (Mouse).